The chain runs to 290 residues: 4-hydroxy-tetrahydrodipicolinate synthase (290 aa).

A pyruvate-binding site is contributed by T44. Y132 acts as the Proton donor/acceptor in catalysis. The active-site Schiff-base intermediate with substrate is the K160. Residue I202 participates in pyruvate binding.

The protein belongs to the DapA family. As to quaternary structure, homotetramer; dimer of dimers.

Its subcellular location is the cytoplasm. The enzyme catalyses L-aspartate 4-semialdehyde + pyruvate = (2S,4S)-4-hydroxy-2,3,4,5-tetrahydrodipicolinate + H2O + H(+). It functions in the pathway amino-acid biosynthesis; L-lysine biosynthesis via DAP pathway; (S)-tetrahydrodipicolinate from L-aspartate: step 3/4. In terms of biological role, catalyzes the condensation of (S)-aspartate-beta-semialdehyde [(S)-ASA] and pyruvate to 4-hydroxy-tetrahydrodipicolinate (HTPA). This is 4-hydroxy-tetrahydrodipicolinate synthase from Legionella pneumophila (strain Corby).